The chain runs to 1034 residues: Ubiquitin-like-specific protease 2 (1034 aa).

Disordered regions lie at residues 1-42 (MSAR…FRKD), 71-110 (IELS…HSSL), 388-419 (SHAV…DDAT), 731-800 (IDQS…PIRH), 841-960 (GVSS…DSLG), and 983-1034 (SSPT…DEDP). Residues 19-33 (SSRASSPRSSASLPP) are compositionally biased toward low complexity. Residues 74 to 85 (SDNDVDNNDEGE) show a composition bias toward acidic residues. Residues 743–756 (TSEPPCSRSSSIST) show a composition bias toward low complexity. Ser788 is subject to Phosphoserine. Composition is skewed to polar residues over residues 845–856 (PIKNDQALSSTH), 876–904 (QLSS…VISD), and 912–923 (GVNSESKNTSGI). The residue at position 903 (Ser903) is a Phosphoserine. Phosphoserine occurs at positions 983 and 984. A compositionally biased stretch (polar residues) spans 992–1017 (TSATSKGSNAQLLSNYGDENNQSQDS).

It belongs to the peptidase C48 family.

Functionally, insertion mutation in SMT4 confers temperature and benomyl sensitivity; high copy suppressor of a temperature sensitive mutation in MIF2. This Saccharomyces cerevisiae (strain ATCC 204508 / S288c) (Baker's yeast) protein is Ubiquitin-like-specific protease 2 (ULP2).